The primary structure comprises 273 residues: DnaJ homolog subfamily C member 27 (273 aa).

GTP is bound by residues 23-30, 71-75, and 134-137; these read GNAEVGKS, DMAGH, and NKVD. One can recognise a J domain in the interval 217–273; sequence DSWDMLGVKPGATREEVNKAYRKLAVLLHPDKCVAPGSEDAFKAVVNARTSLLKNIK.

Belongs to the small GTPase superfamily. Rab family.

The protein resides in the nucleus. Functionally, GTPase possibly involved in regulation of the MEK/ERK pathway. The sequence is that of DnaJ homolog subfamily C member 27 (dnajc27) from Danio rerio (Zebrafish).